A 782-amino-acid chain; its full sequence is DnaJ homolog subfamily C member 16 (782 aa).

The signal sequence occupies residues 1 to 25; sequence MEVRKLSISWQFLIVLVLILQILSA. The Cytoplasmic segment spans residues 26–535; sequence LDFDPYRVLG…DSIFHNNWRE (510 aa). Residues 29–93 form the J domain; that stretch reads DPYRVLGVSR…EKRSNYDQYG (65 aa). The Thioredoxin domain maps to 119-247; that stretch reads FYFDESFFHF…LRQFVESLLP (129 aa). A helical; Anchor for type IV membrane protein transmembrane segment spans residues 536–556; the sequence is MMPLLSLIFSALFILFGTVIV. Residues 557 to 782 are Extracellular-facing; the sequence is QAFSDSNDER…FYIPSWPELD (226 aa). Residues 562–593 form a disordered region; that stretch reads SNDERESSPPEKEEAQEKTGKTEPSFTKENSS. A compositionally biased stretch (basic and acidic residues) spans 563–582; it reads NDERESSPPEKEEAQEKTGK. Positions 583–593 are enriched in polar residues; the sequence is TEPSFTKENSS. The N-linked (GlcNAc...) asparagine glycan is linked to Asn631.

It is found in the endoplasmic reticulum membrane. Its function is as follows. Plays an important role in regulating the size of autophagosomes during the formation process. This is DnaJ homolog subfamily C member 16 (DNAJC16) from Homo sapiens (Human).